A 195-amino-acid chain; its full sequence is Imidazoleglycerol-phosphate dehydratase (195 aa).

The protein belongs to the imidazoleglycerol-phosphate dehydratase family.

Its subcellular location is the cytoplasm. It carries out the reaction D-erythro-1-(imidazol-4-yl)glycerol 3-phosphate = 3-(imidazol-4-yl)-2-oxopropyl phosphate + H2O. It participates in amino-acid biosynthesis; L-histidine biosynthesis; L-histidine from 5-phospho-alpha-D-ribose 1-diphosphate: step 6/9. This is Imidazoleglycerol-phosphate dehydratase from Cereibacter sphaeroides (strain ATCC 17029 / ATH 2.4.9) (Rhodobacter sphaeroides).